Here is a 607-residue protein sequence, read N- to C-terminus: Bifunctional lysine-specific demethylase and histidyl-hydroxylase NO66 (607 aa).

2 disordered regions span residues 23 to 121 (GPTI…IKTN) and 139 to 184 (ATQH…GEVE). Residues 25–37 (TIQQTGATKTPKT) show a composition bias toward polar residues. Residues 39 to 58 (SKIRRLSIRKSTRKIKHALK) show a composition bias toward basic residues. Residues 156-167 (DKTPVKRVRSDT) show a composition bias toward basic and acidic residues. Residues 188–405 (EEAEKMFEWL…DLMEKLVPAA (218 aa)) enclose the JmjC domain. 3 residues coordinate Fe cation: His328, Asp330, and His371.

The protein belongs to the ROX family. NO66 subfamily. Requires Fe(2+) as cofactor.

The protein resides in the nucleus. The catalysed reaction is L-histidyl-[protein] + 2-oxoglutarate + O2 = (3S)-3-hydroxy-L-histidyl-[protein] + succinate + CO2. It catalyses the reaction N(6),N(6)-dimethyl-L-lysyl(36)-[histone H3] + 2 2-oxoglutarate + 2 O2 = L-lysyl(36)-[histone H3] + 2 formaldehyde + 2 succinate + 2 CO2. In terms of biological role, oxygenase that can act as both a histone lysine demethylase and a ribosomal histidine hydroxylase. Specifically demethylates 'Lys-4' (H3K4me) and 'Lys-36' (H3K36me) of histone H3, thereby playing a central role in histone code. Also catalyzes the hydroxylation of 60S ribosomal protein L8. The sequence is that of Bifunctional lysine-specific demethylase and histidyl-hydroxylase NO66 from Branchiostoma floridae (Florida lancelet).